We begin with the raw amino-acid sequence, 434 residues long: 3-phosphoshikimate 1-carboxyvinyltransferase (434 aa).

3-phosphoshikimate contacts are provided by Lys22, Ser23, and Arg27. Lys22 serves as a coordination point for phosphoenolpyruvate. 2 residues coordinate phosphoenolpyruvate: Gly94 and Arg122. Positions 167, 169, 314, and 341 each coordinate 3-phosphoshikimate. Gln169 provides a ligand contact to phosphoenolpyruvate. Residue Asp314 is the Proton acceptor of the active site. The phosphoenolpyruvate site is built by Arg345 and Arg391.

This sequence belongs to the EPSP synthase family. As to quaternary structure, monomer.

The protein localises to the cytoplasm. It carries out the reaction 3-phosphoshikimate + phosphoenolpyruvate = 5-O-(1-carboxyvinyl)-3-phosphoshikimate + phosphate. Its pathway is metabolic intermediate biosynthesis; chorismate biosynthesis; chorismate from D-erythrose 4-phosphate and phosphoenolpyruvate: step 6/7. Catalyzes the transfer of the enolpyruvyl moiety of phosphoenolpyruvate (PEP) to the 5-hydroxyl of shikimate-3-phosphate (S3P) to produce enolpyruvyl shikimate-3-phosphate and inorganic phosphate. The sequence is that of 3-phosphoshikimate 1-carboxyvinyltransferase from Leuconostoc mesenteroides subsp. mesenteroides (strain ATCC 8293 / DSM 20343 / BCRC 11652 / CCM 1803 / JCM 6124 / NCDO 523 / NBRC 100496 / NCIMB 8023 / NCTC 12954 / NRRL B-1118 / 37Y).